Reading from the N-terminus, the 94-residue chain is MSEDKPKEGVKTENDHINLKVAGQDGSVVQFKIKRHTPLSKLMKAYCERQGLSIRQIRFRFDGQPINETDTPAQLEMEDEDTIDVFQQQTGGSC.

A Glycyl lysine isopeptide (Lys-Gly) (interchain with G-Cter in SUMO) cross-link involves residue Lys-11. The region spanning 15-92 is the Ubiquitin-like domain; it reads DHINLKVAGQ…IDVFQQQTGG (78 aa). Gly-92 is covalently cross-linked (Glycyl lysine isopeptide (Gly-Lys) (interchain with K-? in acceptor proteins)). Positions 93-94 are excised as a propeptide; sequence SC.

Belongs to the ubiquitin family. SUMO subfamily. Interacts with sae2 and ube2i. Covalently attached to a number of proteins. Post-translationally, polymeric chains can be formed through Lys-11 cross-linking. In terms of processing, cleavage of precursor form by a sentrin-specific protease is necessary for function.

Its subcellular location is the cytoplasm. It is found in the nucleus. The protein resides in the PML body. Ubiquitin-like protein which can be covalently attached to target lysines either as a monomer or as a lysine-linked polymer. Does not seem to be involved in protein degradation and may function as an antagonist of ubiquitin in the degradation process. Plays a role in a number of cellular processes such as nuclear transport, DNA replication and repair, mitosis and signal transduction. Covalent attachment to its substrates requires prior activation by the E1 complex sae1-sae2 and linkage to the E2 enzyme ube2i. The chain is Small ubiquitin-related modifier 3-like (sumo3l) from Danio rerio (Zebrafish).